Consider the following 300-residue polypeptide: UDP-3-O-acyl-N-acetylglucosamine deacetylase (300 aa).

His-76, His-235, and Asp-239 together coordinate Zn(2+). The active-site Proton donor is His-262.

This sequence belongs to the LpxC family. Requires Zn(2+) as cofactor.

The catalysed reaction is a UDP-3-O-[(3R)-3-hydroxyacyl]-N-acetyl-alpha-D-glucosamine + H2O = a UDP-3-O-[(3R)-3-hydroxyacyl]-alpha-D-glucosamine + acetate. It functions in the pathway glycolipid biosynthesis; lipid IV(A) biosynthesis; lipid IV(A) from (3R)-3-hydroxytetradecanoyl-[acyl-carrier-protein] and UDP-N-acetyl-alpha-D-glucosamine: step 2/6. Functionally, catalyzes the hydrolysis of UDP-3-O-myristoyl-N-acetylglucosamine to form UDP-3-O-myristoylglucosamine and acetate, the committed step in lipid A biosynthesis. The chain is UDP-3-O-acyl-N-acetylglucosamine deacetylase from Halorhodospira halophila (strain DSM 244 / SL1) (Ectothiorhodospira halophila (strain DSM 244 / SL1)).